Here is a 382-residue protein sequence, read N- to C-terminus: Na(+)/H(+) antiporter NhaA (382 aa).

The next 11 helical transmembrane spans lie at 14-34 (AGGI…NSSF), 49-69 (MSVS…LIGL), 87-107 (IFPA…YVAF), 117-137 (GWAI…ALLG), 146-166 (VFLL…IAFF), 171-191 (LSVL…LLNS), 205-225 (FILW…GVVL), 247-267 (ALHP…NAGI), 285-305 (VALG…YVAV), 321-341 (IFAV…ISSL), and 356-376 (LGIL…LHIS).

It belongs to the NhaA Na(+)/H(+) (TC 2.A.33) antiporter family.

It is found in the cell inner membrane. The enzyme catalyses Na(+)(in) + 2 H(+)(out) = Na(+)(out) + 2 H(+)(in). Its function is as follows. Na(+)/H(+) antiporter that extrudes sodium in exchange for external protons. The protein is Na(+)/H(+) antiporter NhaA of Aliivibrio salmonicida (strain LFI1238) (Vibrio salmonicida (strain LFI1238)).